Reading from the N-terminus, the 78-residue chain is Large ribosomal subunit protein bL28 (78 aa).

It belongs to the bacterial ribosomal protein bL28 family.

The protein is Large ribosomal subunit protein bL28 of Synechococcus sp. (strain WH7803).